The following is a 94-amino-acid chain: Defensin alpha 5 (94 aa).

The N-terminal stretch at 1–19 is a signal peptide; the sequence is MRTIAILAAILLVALQAQA. Cystine bridges form between C65-C93, C67-C82, and C72-C92.

The protein belongs to the alpha-defensin family. Homodimer. Homotetramer. Interacts with B.antracis lef/lethal factor. Glycosylated. Post-translationally, proteolytically cleaved at Arg-62 by trypsin. Both the propeptide form proHD5/HD5(20-94) and HD5(56-94) are cleaved into the lumenal peptide form HD5(63-94) by trypsin. Unprocessed proHD5 exerts antimicrobial activities, but peptide potency is enhanced by peptide processing. Proteolytically cleaved in duodenal fluid; derived fragments are antimicrobially active against commensal bacteria (in vitro).

The protein resides in the secreted. It is found in the cytoplasmic vesicle. Its subcellular location is the secretory vesicle. In terms of biological role, host-defense peptide that maintains sterility in the urogenital system. Has antimicrobial activity against a wide range of bacteria, including Gram-negative E.coli, P.aeruginosa and S.typhimurium, and Gram-positive E.aerogenes, S.aureus, B.cereus, E.faecium and L.monocytogenes. Confers resistance to intestinal infection by S.typhimurium. Exhibits antimicrobial activity against enteric commensal bacteria such as B.adolescentis, L.acidophilus, B.breve, L.fermentum, B.longum and S.thermophilus. Binds to bacterial membranes and causes membrane disintegration. Induces the secretion of the chemokine IL-8 by intestinal epithelial cells. Binds to B.antracis lef/lethal factor, a major virulence factor from B.anthracis, and neutralizes its enzymatic activity. The protein is Defensin alpha 5 (DEFA5) of Pan troglodytes (Chimpanzee).